The sequence spans 305 residues: Probable lipid kinase YegS-like (305 aa).

Residues 2-134 form the DAGKc domain; it reads HPPAPALLII…DLAKVNDQRY (133 aa). ATP is bound by residues Thr40, 66–72, and Thr95; that span reads GDGTINE. 3 residues coordinate Mg(2+): Leu215, Asp218, and Leu220. The Proton acceptor role is filled by Glu271.

It belongs to the diacylglycerol/lipid kinase family. YegS lipid kinase subfamily. The cofactor is Mg(2+). Requires Ca(2+) as cofactor.

It is found in the cytoplasm. In terms of biological role, probably phosphorylates lipids; the in vivo substrate is unknown. This is Probable lipid kinase YegS-like from Serratia proteamaculans (strain 568).